A 115-amino-acid polypeptide reads, in one-letter code: Large ribosomal subunit protein bL19 (115 aa).

The protein belongs to the bacterial ribosomal protein bL19 family.

Functionally, this protein is located at the 30S-50S ribosomal subunit interface and may play a role in the structure and function of the aminoacyl-tRNA binding site. The sequence is that of Large ribosomal subunit protein bL19 from Brevibacillus brevis (strain 47 / JCM 6285 / NBRC 100599).